An 89-amino-acid chain; its full sequence is Large ribosomal subunit protein bL27 (89 aa).

Residues 1 to 23 (MAHKKAGGSSRNGRDSHSKRLGV) are disordered.

It belongs to the bacterial ribosomal protein bL27 family.

This Mesorhizobium japonicum (strain LMG 29417 / CECT 9101 / MAFF 303099) (Mesorhizobium loti (strain MAFF 303099)) protein is Large ribosomal subunit protein bL27.